A 591-amino-acid chain; its full sequence is MVTVSEQTAQGHVIEAYGNLLRVRFDGYVRQGEVAYVNVDNTWLKAEVIEVADQEVKVQVFEDTQGACRGALVTFSGHLLEAELGPGLLQGIFDGLQNRLEVLAEDSSFLQRGKHVNAISDHNLWNYTPVASVGDTLRRGDLLGTVPEGRFTHKIMVPFSCFQEVTLTWVISEGTYNAHTVVAKARDAQGKECAFTMVQRWPIKQAFIEGEKIPAHKIMDVGLRILDTQIPVLKGGTFCTPGPFGAGKTVLQHHLSKYAAVDIVILCACGERAGEVVEVLQEFPHLIDPHTGKSLMHRTCIICNTSSMPVAARESSIYLGVTIAEYYRQMGLDILLLADSTSRWAQALREISGRLEEIPGEEAFPAYLSSRIAAFYERGGAITTKDGSEGSLTICGAVSPAGGNFEEPVTQSTLAVVGAFCGLSKARADARRYPSIDPLISWSKYLNQVGQILEEKVSGWGGAVKKAAQFLEKGSEIGKRMEVVGEEGVSMEDMEIYLKAELYDFCYLQQNAFDPVDCYCPFERQIELFSLISRIFDAKFVFDSPDDARSFFLELQSKIKTLNGLKFLSEEYHESKEVIVRLLEKTMVQMA.

242 to 249 is an ATP binding site; the sequence is GPFGAGKT.

It belongs to the ATPase alpha/beta chains family.

The enzyme catalyses ATP + H2O + 4 H(+)(in) = ADP + phosphate + 5 H(+)(out). Functionally, produces ATP from ADP in the presence of a proton gradient across the membrane. The V-type alpha chain is a catalytic subunit. The chain is V-type ATP synthase alpha chain (atpA) from Chlamydia pneumoniae (Chlamydophila pneumoniae).